A 68-amino-acid chain; its full sequence is Cell division protein ZapB (68 aa).

The stretch at 3-58 (LELLSKLETKIQAALETIELLKMELEEEKQKNHTLNEQNQQLSQDLTSWNEKVTGL) forms a coiled coil.

It belongs to the ZapB family. In terms of assembly, homodimer. The ends of the coiled-coil dimer bind to each other, forming polymers. Interacts with FtsZ.

The protein localises to the cytoplasm. Non-essential, abundant cell division factor that is required for proper Z-ring formation. It is recruited early to the divisome by direct interaction with FtsZ, stimulating Z-ring assembly and thereby promoting cell division earlier in the cell cycle. Its recruitment to the Z-ring requires functional FtsA or ZipA. This Shewanella loihica (strain ATCC BAA-1088 / PV-4) protein is Cell division protein ZapB.